Here is a 1124-residue protein sequence, read N- to C-terminus: DNA-directed RNA polymerase subunit Rpo2 (1124 aa).

Residues Cys1061, Cys1064, Cys1079, and His1082 each coordinate Zn(2+).

The protein belongs to the RNA polymerase beta chain family. In terms of assembly, part of the 13-subunit RNA polymerase complex. The cofactor is Zn(2+).

Its subcellular location is the cytoplasm. The catalysed reaction is RNA(n) + a ribonucleoside 5'-triphosphate = RNA(n+1) + diphosphate. In terms of biological role, DNA-dependent RNA polymerase (RNAP) catalyzes the transcription of DNA into RNA using the four ribonucleoside triphosphates as substrates. This subunit is involved in DNA promoter recognition. The chain is DNA-directed RNA polymerase subunit Rpo2 from Saccharolobus solfataricus (strain ATCC 35092 / DSM 1617 / JCM 11322 / P2) (Sulfolobus solfataricus).